Reading from the N-terminus, the 95-residue chain is Histone-like DNA-binding protein (95 aa).

The protein belongs to the bacterial histone-like protein family.

This chain is Histone-like DNA-binding protein, found in Rickettsia typhi (strain ATCC VR-144 / Wilmington).